A 333-amino-acid polypeptide reads, in one-letter code: Phosphate acyltransferase (333 aa).

Belongs to the PlsX family. As to quaternary structure, homodimer. Probably interacts with PlsY.

The protein resides in the cytoplasm. The enzyme catalyses a fatty acyl-[ACP] + phosphate = an acyl phosphate + holo-[ACP]. It functions in the pathway lipid metabolism; phospholipid metabolism. Catalyzes the reversible formation of acyl-phosphate (acyl-PO(4)) from acyl-[acyl-carrier-protein] (acyl-ACP). This enzyme utilizes acyl-ACP as fatty acyl donor, but not acyl-CoA. The protein is Phosphate acyltransferase of Desulforamulus reducens (strain ATCC BAA-1160 / DSM 100696 / MI-1) (Desulfotomaculum reducens).